Consider the following 28-residue polypeptide: VDACYEACMHHHMNSDDCIEACKNPVPP.

Intrachain disulfides connect cysteine 4-cysteine 22 and cysteine 8-cysteine 18.

It belongs to the short scorpion toxin superfamily. Potassium channel inhibitor family. Gamma-KTx 2 subfamily. In terms of processing, contains 2 disulfide bonds. Expressed by the venom gland.

The protein localises to the secreted. Reversibly blocks voltage-gated potassium channels Kv1.2/KCNA2 and Kv1.3/KCNA3. In Pandinus imperator (Emperor scorpion), this protein is Potassium channel toxin kappa-KTx 2.9.